The chain runs to 922 residues: MSQFKRQRINPLPGGRNFSGAASTSLLGPPPGLLTPPVATDLSQNARHLQSGEKQRVFTGIVTSLHDYFGVVDEEVFFQLSVVKGRLPQLGEKVLVKAAYNPGQAVPWNAVKVQTLSNQPLLKSPAPPLLHVAALGQKQGILGAQPQLIFQPHRIPPLFPQKPLSLFQTSHTLHLSHLNRFPARGPHGRLDQGRSDDYDSKKRKQRAGGEPWGAKKPRHDLSPYRVHLTPYTVDSPTCDFLELQRRYRSLLVPSDFLSVHLSWLSAFPLGQPFSLHHPSRIQVSSEKEAAPDTGAEPSPEDSDPTYSSKVLLLSSPGLEEFYRCCMLFVDDMAEPRETPEHPLKQLKFLLGRKEEEAVLVGGEWSPSLDGLDPQADPQVLVRTAIRCAQAQTGIDLSTCTKWWRFAEFQYLQPGPPRQLHTVVVYLPDVWTIMPTLEEWEALCQQKATEAAPQPHEASGEAEATEQAPDVSEQADTSKQNTETMEATTQQDVDTDLPEAPPPPLEPAVMARPRCVNLSLYGIVEDRRPKERISFEVVVLAELFVEMLQRDFGYRIYKTLLSLPEKVVSPPEPEKEEAAKEDAVKEEEAVKEEAVKVSKDEVQNEGTAAESDSPLKEDGLLPKRPSSGGEEEEKARGEAAEDLCEMALDPDLLLLRDDGEDEFAGAKLEETEVRSVASNQSEMEYSSLQDMPKELDPSTVLPLDCLLAFVFFDANWCGYLHRRDLERVLLTLGIRLSAEQAKQLVSRVVAQNICQYRSLQYSRAEVLDDGLPEDVLFGNLDLLPPSGKSTKPGAAPTEHKGLVPHNGSLINVGSLLQRAEQQDSGRLYLENKIHTLELKLEESHNRFSATEVTNKTLAAEMQELRARLAEAEETARTAERQKNQLQRQMQDFRRRLTPLHLEMQRIVEKADSWVEKEEPTPSN.

Positions 1-39 (MSQFKRQRINPLPGGRNFSGAASTSLLGPPPGLLTPPVA) are disordered. The residue at position 35 (Thr35) is a Phosphothreonine. Lys112 is modified (N6-acetyllysine; by KAT8). At Lys123 the chain carries N6-methyllysine. Ser124 is subject to Phosphoserine. Disordered regions lie at residues 178-219 (LNRF…KPRH), 280-307 (RIQV…PTYS), 446-508 (KATE…EPAV), and 567-638 (VSPP…RGEA). Omega-N-methylarginine is present on Arg180. The span at 188–200 (GRLDQGRSDDYDS) shows a compositional bias: basic and acidic residues. At Lys215 the chain carries N6-acetyllysine; by KAT8. The segment covering 473–491 (QADTSKQNTETMEATTQQD) has biased composition (polar residues). A Phosphothreonine modification is found at Thr483. A Phosphoserine modification is found at Ser568. Over residues 571–601 (EPEKEEAAKEDAVKEEEAVKEEAVKVSKDEV) the composition is skewed to basic and acidic residues. Residues 573–596 (EKEEAAKEDAVKEEEAVKEEAVKV) adopt a coiled-coil conformation. Lys590 is covalently cross-linked (Glycyl lysine isopeptide (Lys-Gly) (interchain with G-Cter in SUMO2 and SUMO3); alternate). Lys590 is covalently cross-linked (Glycyl lysine isopeptide (Lys-Gly) (interchain with G-Cter in SUMO2); alternate). Residues 609-669 (ESDSPLKEDG…DEFAGAKLEE (61 aa)) are interaction with MCC. Phosphoserine is present on residues Ser612, Ser626, Ser674, Ser677, and Ser680. Tyr684 is subject to Phosphotyrosine. A phosphoserine mark is found at Ser686 and Ser807. Residues 703–922 (DCLLAFVFFD…VEKEEPTPSN (220 aa)) form an interaction with NR1D1 region. A coiled-coil region spans residues 828 to 898 (LENKIHTLEL…QDFRRRLTPL (71 aa)). Residue Thr896 is modified to Phosphothreonine.

In terms of assembly, component of the DBIRD complex. Interacts with ZNF326/ZIRD; the interaction is direct. Interacts (via N-terminus) with SIRT1, which inhibits the deacetylation of substrates. Interacts (via N-terminus) with SUV39H1; this interaction abolishes the interaction with SIRT1. Component of a nuclear receptor-mediated transcription complex composed of at least ZNF335, CCAR2 and EMSY; the complex stimulates the transcription of nuclear receptor target genes such as SOX9 and HOXA1. Within the complex interacts with EMSY and interacts with ZNF335 (via C-terminus). Components of this complex may associate with components of a histone methylation complex to form a complex at least composed of ZNF335, HCFC1, CCAR2, EMSY, MKI67, RBBP5, ASH2L and WDR5. Within this complex, interacts with ASH2L. Interacts with NR1D1. Interacts (via N-terminus) with ESR1 and ESR2. Interacts (via N-terminus) with HDAC3 (via C-terminus). Interacts with HDAC1 and MED2F. Interacts with MCC. Interacts (via N-terminus) with NR1H2 and NR1H3 in a ligand-independent manner. Interacts with CSNK2A1. Interacts (via N-terminus) with p53/TP53. Interacts (via N-terminus) with BRCA1 (via the BRCT domains). Interacts (via N-terminus) with CHEK2 (via protein kinase domain). Interacts with PSEM3. Interacts (via N-terminus) with PSIA3 and SENP1. The sumoylated form shows a preferential interaction with SIRT1 as compared to its unmodified form. Interacts with CECR2; may form part of the CERF-1 and/or CEF-5 ISWI chromatin remodeling complexes in embryonic stem cells. In terms of processing, acetylation at Lys-112 and Lys-215 by KAT8 prevents inhibitory binding to SIRT1 and increases its deacetylase activity. Genotoxic stress induces its sumoylation and sumoylation promotes the SIRT1-CCAR2 interaction which in turn inhibits SIRT1-mediated deacetylation of p53/TP53. Sumoylation leads to transcriptional activation of p53/TP53 by sequestering SIRT1 from p53/TP53. Desumoylated by SENP1.

The protein localises to the nucleus. The protein resides in the cytoplasm. It localises to the cytoskeleton. Its subcellular location is the spindle. In terms of biological role, core component of the DBIRD complex, a multiprotein complex that acts at the interface between core mRNP particles and RNA polymerase II (RNAPII) and integrates transcript elongation with the regulation of alternative splicing: the DBIRD complex affects local transcript elongation rates and alternative splicing of a large set of exons embedded in (A + T)-rich DNA regions. Inhibits SIRT1 deacetylase activity leading to increasing levels of p53/TP53 acetylation and p53-mediated apoptosis. Inhibits SUV39H1 methyltransferase activity. Mediates ligand-dependent transcriptional activation by nuclear hormone receptors. Plays a critical role in maintaining genomic stability and cellular integrity following UV-induced genotoxic stress. Regulates the circadian expression of the core clock components NR1D1 and BMAL1. Enhances the transcriptional repressor activity of NR1D1 through stabilization of NR1D1 protein levels by preventing its ubiquitination and subsequent degradation. Represses the ligand-dependent transcriptional activation function of ESR2. Acts as a regulator of PCK1 expression and gluconeogenesis by a mechanism that involves, at least in part, both NR1D1 and SIRT1. Negatively regulates the deacetylase activity of HDAC3 and can alter its subcellular localization. Positively regulates the beta-catenin pathway (canonical Wnt signaling pathway) and is required for MCC-mediated repression of the beta-catenin pathway. Represses ligand-dependent transcriptional activation function of NR1H2 and NR1H3 and inhibits the interaction of SIRT1 with NR1H3. Plays an important role in tumor suppression through p53/TP53 regulation; stabilizes p53/TP53 by affecting its interaction with ubiquitin ligase MDM2. Represses the transcriptional activator activity of BRCA1. Inhibits SIRT1 in a CHEK2 and PSEM3-dependent manner and inhibits the activity of CHEK2 in vitro. This Mus musculus (Mouse) protein is Cell cycle and apoptosis regulator protein 2 (Ccar2).